Reading from the N-terminus, the 366-residue chain is Spermidine/putrescine import ATP-binding protein PotA (366 aa).

The ABC transporter domain maps to 8-239 (IRFENVTKQF…PINKFVADFI (232 aa)). An ATP-binding site is contributed by 41-48 (GPSGCGKT).

The protein belongs to the ABC transporter superfamily. Spermidine/putrescine importer (TC 3.A.1.11.1) family. In terms of assembly, the complex is composed of two ATP-binding proteins (PotA), two transmembrane proteins (PotB and PotC) and a solute-binding protein (PotD).

Its subcellular location is the cell membrane. It carries out the reaction ATP + H2O + polyamine-[polyamine-binding protein]Side 1 = ADP + phosphate + polyamineSide 2 + [polyamine-binding protein]Side 1.. In terms of biological role, part of the ABC transporter complex PotABCD involved in spermidine/putrescine import. Responsible for energy coupling to the transport system. The polypeptide is Spermidine/putrescine import ATP-binding protein PotA (Listeria innocua serovar 6a (strain ATCC BAA-680 / CLIP 11262)).